The sequence spans 172 residues: MKEEKKLLLREVEEKITASQGFILLRYLGFTAAHSRSFRNNLSGVSAEFEVLKKKIFFKALETSGVEMDPEGGEGHLGVVFAYGDPVSAAKQVLDFNKQHNDSLVFLAGRIDNASLSGREVEAVAKLPSMKELRQQVVGLIAAPMSQVAGIMNSVLSGVISCVDQKAEKTQE.

The protein belongs to the universal ribosomal protein uL10 family. In terms of assembly, part of the ribosomal stalk of the 50S ribosomal subunit. The N-terminus interacts with L11 and the large rRNA to form the base of the stalk. The C-terminus forms an elongated spine to which L12 dimers bind in a sequential fashion forming a multimeric L10(L12)X complex.

In terms of biological role, forms part of the ribosomal stalk, playing a central role in the interaction of the ribosome with GTP-bound translation factors. The chain is Large ribosomal subunit protein uL10 (rplJ) from Chlamydia trachomatis serovar D (strain ATCC VR-885 / DSM 19411 / UW-3/Cx).